Consider the following 1042-residue polypeptide: MPISANKYFLLVGVFIGDKMKKEAAKLNEDYVVENAAIQRLKNLGYSYKHGSELTPEYNERESYRDAILKNRFIKAIKNINPWLTEELALKVYKTVTNIDNPDFNMRGKIFYEMLINGVKLEFKENGEKKTRFVKLIDFENINKNEFLVANQFEVEYYYENGRFRRPDLVVFINGIPIAIFEFKSPKSNQTAKDAFNDHKTKMKDIPQLYQYAQILVVSDGLETKYGSPTSDWDRFFVWEGVESDDDVEVIEVDNYGNTMYKYKGNPYTSLDILLMGLFKKEHLIEFLEDFIIHDKKKIIATYYQFYTVKKAVDRTIKSVLYGETPEDRRIGIVWHAQGTGKSITMLFYAKKALKQKELNYPLLVFLTDRLELDEQLYNVFSSVFSEAERAESIAELQELIKKTPGGIIFATIQKFGRKSKDEHYPFLTDRNNIIIIADEAHRSHYGTLAQNLRKAIPNASFLAFTATPIDYKDRSTFLVFGDYISAYPIDKAKRHGVVVPIYYEARLVELHLTNEFIDLEFDEISERVANDPETKESIKEVFAKLEKIMLTEDYLSKVSKDIIEHFNKRLQDFDGKAMVVTISRKVAVELYKWITKQPNAPKIAVVMSGNKSKDPEDFHPHIRTKKELENLAKEFKDPESDLKMVIVVDMWLTGFDVPCLHTMYFLKPMKNHSLAQAIARVNRVFKDKPGGLIVDYIGIADDLSKSLSKYSSEARKDLMTDIKVVIEEMKRRYEKVTSYFKNINYKDWKKLSSEDLSLLTVKAYQRVAKDDNTKKEFVRNVIALKKLYLLARPHPETIGIKDDLEFFEMIKKMIVKYSTKKIREISQDLENDIQSLISKSISAKELVDVFEMLKKEKPELSVLSDEFLSEIAKIEYKDYVRDVLIKILNDDIRVRMAKNPIRFKKFSERLNEVIEKYRIKVITTAEMIEELVNLAKEIRKAAEEGKELGLTEEELAFYDLLLSYPNIPLTDKKRVEKIAKEIARMMSGYIKARDWKKKKNLQSKIRAKLKIILMKEGIKDYSLINKISDDLFEYAKNIYAI.

Residues 323–487 (GETPEDRRIG…FLVFGDYISA (165 aa)) form the Helicase ATP-binding domain. A DEAH box motif is present at residues 439–442 (DEAH). The Helicase C-terminal domain maps to 551–731 (LTEDYLSKVS…DIKVVIEEMK (181 aa)).

The protein belongs to the HsdR family. In terms of assembly, the type I restriction/modification system is composed of three polypeptides R, M and S.

It carries out the reaction Endonucleolytic cleavage of DNA to give random double-stranded fragments with terminal 5'-phosphates, ATP is simultaneously hydrolyzed.. The restriction (R) subunit of a type I restriction enzyme that recognizes 5'-CCAN(5)GTR-3' and cleaves a random distance away. The R subunit is required for both nuclease and ATPase activities, but not for modification. After locating a non-methylated recognition site, the enzyme complex serves as a molecular motor that translocates DNA in an ATP-dependent manner until a collision occurs that triggers cleavage. In Methanocaldococcus jannaschii (strain ATCC 43067 / DSM 2661 / JAL-1 / JCM 10045 / NBRC 100440) (Methanococcus jannaschii), this protein is Putative type I restriction enzyme MjaIXP endonuclease subunit.